The primary structure comprises 332 residues: Cell growth regulator with RING finger domain protein 1 (332 aa).

The segment at 274-309 (CVVCQNGGVNWVLLPCRHACLCDSCVCYFKQCPMCR) adopts an RING-type zinc-finger fold.

In terms of tissue distribution, highly expressed in testis, lower levels of expression is seen in skeletal muscle, liver, lung and brain.

It localises to the nucleus. Its subcellular location is the endoplasmic reticulum. Functionally, able to inhibit growth in several cell lines. The sequence is that of Cell growth regulator with RING finger domain protein 1 (Cgrrf1) from Rattus norvegicus (Rat).